The primary structure comprises 541 residues: Protein wntless homolog A (541 aa).

The signal sequence occupies residues 1-28; sequence MAGAIIENMSTKKLCMVGVALLLLQVLA. Topologically, residues 29-232 are lumenal; sequence FLVGGLIAPK…SIFQNGGFTM (204 aa). The chain crosses the membrane as a helical span at residues 233–253; sequence VWFAMKTFLTPSIIIIMIWYW. The Cytoplasmic portion of the chain corresponds to 254–268; the sequence is RRITMMTRSPVLLEK. A helical membrane pass occupies residues 269-289; the sequence is VIFALGFSMTFINIPVEWFSI. Over 290–303 the chain is Lumenal; that stretch reads GYDWTWMLLFGDIR. A helical transmembrane segment spans residues 304-324; it reads QGIFYAMLLSFWIIFCGEHMM. Topologically, residues 325–331 are cytoplasmic; it reads DQTERNR. A helical transmembrane segment spans residues 332 to 352; the sequence is ISVYWKQVGPIAFGSCCLFIF. Residues 353-379 lie on the Lumenal side of the membrane; sequence DMCERGVQLKNPFYSIWTTDVGAEIAM. The helical transmembrane segment at 380–400 threads the bilayer; the sequence is AFIIVAGICACLYFLFLCFMV. Residues 401-431 lie on the Cytoplasmic side of the membrane; sequence YQVFRNISGKQSNLPAMTKARRLHYEGLIFR. The helical transmembrane segment at 432-452 threads the bilayer; sequence FKFLMIITLACAALTIVFFIT. Topologically, residues 453-471 are lumenal; sequence TQITEGNWKLGDLSIELNS. Residues 472–492 form a helical membrane-spanning segment; that stretch reads AFFTGVYGMWNLYVFALMFLY. The Cytoplasmic portion of the chain corresponds to 493-541; sequence APSHKHYGDGQSNDGAGMSSGEELQLTTTITHIDGPTEVYRLAGKEAQE.

The protein belongs to the wntless family.

The protein localises to the golgi apparatus membrane. Its subcellular location is the cytoplasmic vesicle membrane. Functionally, required for a subset of Wnt-dependent developmental processes, in particular, eye and pronephros development. Regulates the secretion of wnt4, which is required for eye development. The polypeptide is Protein wntless homolog A (wls-a) (Xenopus laevis (African clawed frog)).